A 73-amino-acid polypeptide reads, in one-letter code: Translation initiation factor IF-1 (73 aa).

The S1-like domain maps to 1–73 (MDIKEEAIET…TKGRIVYREK (73 aa)).

The protein belongs to the IF-1 family. In terms of assembly, component of the 30S ribosomal translation pre-initiation complex which assembles on the 30S ribosome in the order IF-2 and IF-3, IF-1 and N-formylmethionyl-tRNA(fMet); mRNA recruitment can occur at any time during PIC assembly.

It is found in the cytoplasm. In terms of biological role, one of the essential components for the initiation of protein synthesis. Stabilizes the binding of IF-2 and IF-3 on the 30S subunit to which N-formylmethionyl-tRNA(fMet) subsequently binds. Helps modulate mRNA selection, yielding the 30S pre-initiation complex (PIC). Upon addition of the 50S ribosomal subunit IF-1, IF-2 and IF-3 are released leaving the mature 70S translation initiation complex. This Borreliella afzelii (strain PKo) (Borrelia afzelii) protein is Translation initiation factor IF-1.